The primary structure comprises 449 residues: Probable glycine dehydrogenase (decarboxylating) subunit 1 (449 aa).

Belongs to the GcvP family. N-terminal subunit subfamily. In terms of assembly, the glycine cleavage system is composed of four proteins: P, T, L and H. In this organism, the P 'protein' is a heterodimer of two subunits.

The catalysed reaction is N(6)-[(R)-lipoyl]-L-lysyl-[glycine-cleavage complex H protein] + glycine + H(+) = N(6)-[(R)-S(8)-aminomethyldihydrolipoyl]-L-lysyl-[glycine-cleavage complex H protein] + CO2. Functionally, the glycine cleavage system catalyzes the degradation of glycine. The P protein binds the alpha-amino group of glycine through its pyridoxal phosphate cofactor; CO(2) is released and the remaining methylamine moiety is then transferred to the lipoamide cofactor of the H protein. This Solibacter usitatus (strain Ellin6076) protein is Probable glycine dehydrogenase (decarboxylating) subunit 1.